Here is a 348-residue protein sequence, read N- to C-terminus: D-alanine--D-alanine ligase (348 aa).

One can recognise an ATP-grasp domain in the interval 136–341 (KYLLQTVGIP…YSDLIEELIQ (206 aa)). 169 to 224 (EGSLIYPVFVKPANMGSSVGISKVENREELQEALEEAFRYDARAIVEQGIEAREIE) contacts ATP. Residues Asp-295, Glu-308, and Asn-310 each coordinate Mg(2+).

The protein belongs to the D-alanine--D-alanine ligase family. Mg(2+) is required as a cofactor. The cofactor is Mn(2+).

Its subcellular location is the cytoplasm. It catalyses the reaction 2 D-alanine + ATP = D-alanyl-D-alanine + ADP + phosphate + H(+). It participates in cell wall biogenesis; peptidoglycan biosynthesis. Its function is as follows. Cell wall formation. The chain is D-alanine--D-alanine ligase (ddl) from Enterococcus faecalis (strain ATCC 700802 / V583).